The primary structure comprises 119 residues: MPTPHTFSRELRLLTPEHFKRVFAEPVRAASPQITLLACPNTLEHPRLGLAVPKKALKRAVWRNRVKRVVRESFRLNQASLPAIDIVVIAKGGVKEMDNEELFKLLEKLWRTLSRRCNG.

Belongs to the RnpA family. As to quaternary structure, consists of a catalytic RNA component (M1 or rnpB) and a protein subunit.

The catalysed reaction is Endonucleolytic cleavage of RNA, removing 5'-extranucleotides from tRNA precursor.. Functionally, RNaseP catalyzes the removal of the 5'-leader sequence from pre-tRNA to produce the mature 5'-terminus. It can also cleave other RNA substrates such as 4.5S RNA. The protein component plays an auxiliary but essential role in vivo by binding to the 5'-leader sequence and broadening the substrate specificity of the ribozyme. In Aeromonas salmonicida (strain A449), this protein is Ribonuclease P protein component.